A 1447-amino-acid polypeptide reads, in one-letter code: MGARASVLSGGELDRWEKIRLRPGGKKKYKLKHIVWASRELERFAVNPGLLETSEGCRQILGQLQPSLQTGSEELRSLYNTVATLYCVHQRIEIKDTKEALDKIEEEQNKSKKKAQQAAADTGHSSQVSQNYPIVQNIQGQMVHQAISPRTLNAWVKVVEEKAFSPEVIPMFSALSEGATPQDLNTMLNTVGGHQAAMQMLKETINEEAAEWDRVHPVHAGPIAPGQMREPRGSDIAGTTSTLQEQIGWMTNNPPIPVGEIYKRWIILGLNKIVRMYSPTSILDIRQGPKEPFRDYVDRFYKTLRAEQASQEVKNWMTETLLVQNANPDCKTILKALGPAATLEEMMTACQGVGGPGHKARVLAEAMSQVTNSTTIMMQRGNFRNQRKIVKCFNCGKEGHIARNCKAPRKKGCWKCGKEGHQMKDCTERQANFLREDLAFLQGKAREFSSEQTRANSPTISSEQTRANSPTRRELQVWGRDNNSPSEAGADRQGTVSFNFPQITLWQRPLVTIKIGGQLKEALLDTGADDTVLEEMSLPGRWKPKMIGGIGGFIKVRQYDQILIEICGHKAIGTVLVGPTPVNIIGRNLLTQIGCTLNFPISPIETVPVKLKPGMDGPKVKQWPLTEEKIKALVEICTEMEKEGKISKIGPENPYNTPVFAIKKKDSTKWRKLVDFRELNRRTQDFWEVQLGIPHPAGLKKKKSVTVLDVGDAYFSVPLDEDFRKYTAFTIPSINNETPGSGYQYNVLPQGWKGSPAIFQSSMTKILEPFRKQNPDIVIYQYMDDLYVGSDLEIGQHRTKIEELRQHLLRWGFTTPDKKHQKEPPFLWMGYELHPDKWTIQPIVLPEKDSWTVNDIQKLVGKLNWASQIYPGIKVRQLCKLLRGTKALTEVIPLTEEAELELAENREILKEPVHGVYYDPSKDLIAEIQKQGQGQWTYQIYQEPFKNLKTGKYARMRGAHTNDVKQLTEAVQKITTESIVIWGKTPKFKLPIQKETWETWWTEYWQATWIPEWEFVNTPPLVKLWYQLEKEPIVGAETFYVDGAASRETKLGKAGYVTNRGRQKVVTLTHTTNQKTELQAIHLALQDSGLEVNIVTDSQYALGIIQAQPDKSESELVNQIIEQLIKKEKVYLAWVPAHKGIGGNEQVDKLVSAGIRKILFLDGIDKAQEEHEKYHSNWRAMASDFNLPPVVAKEIVASCDKCQLKGEAMHGQVDCSPGIWQLDCTHLEGKVILVAVHVASGYIEAEVIPAETGQETAYFLLKLAGRWPVKTIHTDNGSNFTSATVKAACWWAGIKQEFGIPYNPQSQGVVESMNKELKKIIGQVRDQAEHLKTAVQMAVFIHNFKRKGGIGGYSAGERIVDIIATDIQTKELQKQITKIQNFRVYYRDSRNPLWKGPAKLLWKGEGAVVIQDNSDIKVVPRRKAKIIRDYGKQMAGDDCVASRQDED.

Residue Gly-2 is the site of N-myristoyl glycine; by host attachment. Residues 7–31 (VLSGGELDRWEKIRLRPGGKKKYKL) form an interaction with Gp41 region. An interaction with host CALM1 region spans residues 8 to 43 (LSGGELDRWEKIRLRPGGKKKYKLKHIVWASRELER). Positions 12–19 (ELDRWEKI) are interaction with host AP3D1. The segment at 14-33 (DRWEKIRLRPGGKKKYKLKH) is interaction with membrane phosphatidylinositol 4,5-bisphosphate and RNA. Residues 16 to 22 (WEKIRLR) carry the Nuclear export signal motif. Positions 26 to 32 (KKKYKLK) match the Nuclear localization signal motif. An interaction with membrane phosphatidylinositol 4,5-bisphosphate region spans residues 73–77 (EELRS). The interval 106 to 128 (EEQNKSKKKAQQAAADTGHSSQV) is disordered. Residue Tyr-132 is modified to Phosphotyrosine; by host. The segment at 189 to 227 (NTVGGHQAAMQMLKETINEEAAEWDRVHPVHAGPIAPGQ) is interaction with human PPIA/CYPA and NUP153. The dimerization/Multimerization of capsid protein p24 stretch occupies residues 277 to 363 (YSPTSILDIR…GGPGHKARVL (87 aa)). CCHC-type zinc fingers lie at residues 390 to 407 (VKCFNCGKEGHIARNCKA) and 411 to 428 (KGCWKCGKEGHQMKDCTE). The segment at 446-493 (REFSSEQTRANSPTISSEQTRANSPTRRELQVWGRDNNSPSEAGADRQ) is disordered. Residues 450-470 (SEQTRANSPTISSEQTRANSP) show a composition bias toward polar residues. The interval 501–505 (PQITL) is dimerization of protease. In terms of domain architecture, Peptidase A2 spans 520-589 (KEALLDTGAD…TPVNIIGRNL (70 aa)). Asp-525 acts as the For protease activity; shared with dimeric partner in catalysis. Dimerization of protease stretches follow at residues 549-555 (GIGGFIK) and 588-600 (NLLTQIGCTLNFP). The Reverse transcriptase domain maps to 643–833 (EGKISKIGPE…PPFLWMGYEL (191 aa)). Mg(2+) is bound by residues Asp-709, Asp-784, and Asp-785. Positions 826–834 (FLWMGYELH) are RT 'primer grip'. The Tryptophan repeat motif motif lies at 997-1013 (WETWWTEYWQATWIPEW). Positions 1033–1156 (IVGAETFYVD…VDKLVSAGIR (124 aa)) constitute an RNase H type-1 domain. Mg(2+) is bound by residues Asp-1042, Glu-1077, Asp-1097, and Asp-1148. The Integrase-type zinc finger occupies 1162–1203 (DGIDKAQEEHEKYHSNWRAMASDFNLPPVVAKEIVASCDKCQ). His-1171, His-1175, Cys-1199, and Cys-1202 together coordinate Zn(2+). The region spanning 1213–1363 (VDCSPGIWQL…SAGERIVDII (151 aa)) is the Integrase catalytic domain. Residues Asp-1223, Asp-1275, and Glu-1311 each contribute to the Mg(2+) site. Positions 1382 to 1429 (FRVYYRDSRNPLWKGPAKLLWKGEGAVVIQDNSDIKVVPRRKAKIIRD) form a DNA-binding region, integrase-type.

In terms of assembly, homotrimer; further assembles as hexamers of trimers. Interacts with gp41 (via C-terminus). Interacts with host CALM1; this interaction induces a conformational change in the Matrix protein, triggering exposure of the myristate group. Interacts with host AP3D1; this interaction allows the polyprotein trafficking to multivesicular bodies during virus assembly. Part of the pre-integration complex (PIC) which is composed of viral genome, matrix protein, Vpr and integrase. Homodimer; the homodimer further multimerizes as homohexamers or homopentamers. Interacts with human PPIA/CYPA; This interaction stabilizes the capsid. Interacts with human NUP153. Interacts with host PDZD8; this interaction stabilizes the capsid. Interacts with monkey TRIM5; this interaction destabilizes the capsid. As to quaternary structure, homodimer, whose active site consists of two apposed aspartic acid residues. In terms of assembly, heterodimer of p66 RT and p51 RT (RT p66/p51). Heterodimerization of RT is essential for DNA polymerase activity. The overall folding of the subdomains is similar in p66 RT and p51 RT but the spatial arrangements of the subdomains are dramatically different. Homotetramer; may further associate as a homohexadecamer. Part of the pre-integration complex (PIC) which is composed of viral genome, matrix protein, Vpr and integrase. Interacts with human SMARCB1/INI1 and human PSIP1/LEDGF isoform 1. Interacts with human KPNA3; this interaction might play a role in nuclear import of the pre-integration complex. Interacts with human NUP153; this interaction might play a role in nuclear import of the pre-integration complex. It depends on Mg(2+) as a cofactor. In terms of processing, specific enzymatic cleavages by the viral protease yield mature proteins. The protease is released by autocatalytic cleavage. The polyprotein is cleaved during and after budding, this process is termed maturation. Proteolytic cleavage of p66 RT removes the RNase H domain to yield the p51 RT subunit. Nucleocapsid protein p7 might be further cleaved after virus entry. Post-translationally, tyrosine phosphorylated presumably in the virion by a host kinase. Phosphorylation is apparently not a major regulator of membrane association. Phosphorylated possibly by host MAPK1; this phosphorylation is necessary for Pin1-mediated virion uncoating. In terms of processing, methylated by host PRMT6, impairing its function by reducing RNA annealing and the initiation of reverse transcription.

Its subcellular location is the host cell membrane. It localises to the host endosome. The protein resides in the host multivesicular body. It is found in the virion membrane. The protein localises to the host nucleus. Its subcellular location is the host cytoplasm. It localises to the virion. It carries out the reaction Specific for a P1 residue that is hydrophobic, and P1' variable, but often Pro.. It catalyses the reaction Endohydrolysis of RNA in RNA/DNA hybrids. Three different cleavage modes: 1. sequence-specific internal cleavage of RNA. Human immunodeficiency virus type 1 and Moloney murine leukemia virus enzymes prefer to cleave the RNA strand one nucleotide away from the RNA-DNA junction. 2. RNA 5'-end directed cleavage 13-19 nucleotides from the RNA end. 3. DNA 3'-end directed cleavage 15-20 nucleotides away from the primer terminus.. The enzyme catalyses 3'-end directed exonucleolytic cleavage of viral RNA-DNA hybrid.. The catalysed reaction is DNA(n) + a 2'-deoxyribonucleoside 5'-triphosphate = DNA(n+1) + diphosphate. Its activity is regulated as follows. Protease: The viral protease is inhibited by many synthetic protease inhibitors (PIs), such as amprenavir, atazanavir, indinavir, loprinavir, nelfinavir, ritonavir and saquinavir. Use of protease inhibitors in tritherapy regimens permit more ambitious therapeutic strategies. Reverse transcriptase/ribonuclease H: RT can be inhibited either by nucleoside RT inhibitors (NRTIs) or by non nucleoside RT inhibitors (NNRTIs). NRTIs act as chain terminators, whereas NNRTIs inhibit DNA polymerization by binding a small hydrophobic pocket near the RT active site and inducing an allosteric change in this region. Classical NRTIs are abacavir, adefovir (PMEA), didanosine (ddI), lamivudine (3TC), stavudine (d4T), tenofovir (PMPA), zalcitabine (ddC), and zidovudine (AZT). Classical NNRTIs are atevirdine (BHAP U-87201E), delavirdine, efavirenz (DMP-266), emivirine (I-EBU), and nevirapine (BI-RG-587). The tritherapies used as a basic effective treatment of AIDS associate two NRTIs and one NNRTI. Functionally, mediates, with Gag polyprotein, the essential events in virion assembly, including binding the plasma membrane, making the protein-protein interactions necessary to create spherical particles, recruiting the viral Env proteins, and packaging the genomic RNA via direct interactions with the RNA packaging sequence (Psi). Gag-Pol polyprotein may regulate its own translation, by the binding genomic RNA in the 5'-UTR. At low concentration, the polyprotein would promote translation, whereas at high concentration, the polyprotein would encapsidate genomic RNA and then shut off translation. Targets the polyprotein to the plasma membrane via a multipartite membrane-binding signal, that includes its myristoylated N-terminus. Matrix protein is part of the pre-integration complex. Implicated in the release from host cell mediated by Vpu. Binds to RNA. Its function is as follows. Forms the conical core that encapsulates the genomic RNA-nucleocapsid complex in the virion. Most core are conical, with only 7% tubular. The core is constituted by capsid protein hexamer subunits. The core is disassembled soon after virion entry. Host restriction factors such as TRIM5-alpha or TRIMCyp bind retroviral capsids and cause premature capsid disassembly, leading to blocks in reverse transcription. Capsid restriction by TRIM5 is one of the factors which restricts HIV-1 to the human species. Host PIN1 apparently facilitates the virion uncoating. On the other hand, interactions with PDZD8 or CYPA stabilize the capsid. In terms of biological role, encapsulates and protects viral dimeric unspliced genomic RNA (gRNA). Binds these RNAs through its zinc fingers. Acts as a nucleic acid chaperone which is involved in rearangement of nucleic acid secondary structure during gRNA retrotranscription. Also facilitates template switch leading to recombination. As part of the polyprotein, participates in gRNA dimerization, packaging, tRNA incorporation and virion assembly. Functionally, aspartyl protease that mediates proteolytic cleavages of Gag and Gag-Pol polyproteins during or shortly after the release of the virion from the plasma membrane. Cleavages take place as an ordered, step-wise cascade to yield mature proteins. This process is called maturation. Displays maximal activity during the budding process just prior to particle release from the cell. Also cleaves Nef and Vif, probably concomitantly with viral structural proteins on maturation of virus particles. Hydrolyzes host EIF4GI and PABP1 in order to shut off the capped cellular mRNA translation. The resulting inhibition of cellular protein synthesis serves to ensure maximal viral gene expression and to evade host immune response. Also mediates cleavage of host YTHDF3. Mediates cleavage of host CARD8, thereby activating the CARD8 inflammasome, leading to the clearance of latent HIV-1 in patient CD4(+) T-cells after viral reactivation; in contrast, HIV-1 can evade CARD8-sensing when its protease remains inactive in infected cells prior to viral budding. Multifunctional enzyme that converts the viral RNA genome into dsDNA in the cytoplasm, shortly after virus entry into the cell. This enzyme displays a DNA polymerase activity that can copy either DNA or RNA templates, and a ribonuclease H (RNase H) activity that cleaves the RNA strand of RNA-DNA heteroduplexes in a partially processive 3' to 5' endonucleasic mode. Conversion of viral genomic RNA into dsDNA requires many steps. A tRNA(3)-Lys binds to the primer-binding site (PBS) situated at the 5'-end of the viral RNA. RT uses the 3' end of the tRNA primer to perform a short round of RNA-dependent minus-strand DNA synthesis. The reading proceeds through the U5 region and ends after the repeated (R) region which is present at both ends of viral RNA. The portion of the RNA-DNA heteroduplex is digested by the RNase H, resulting in a ssDNA product attached to the tRNA primer. This ssDNA/tRNA hybridizes with the identical R region situated at the 3' end of viral RNA. This template exchange, known as minus-strand DNA strong stop transfer, can be either intra- or intermolecular. RT uses the 3' end of this newly synthesized short ssDNA to perform the RNA-dependent minus-strand DNA synthesis of the whole template. RNase H digests the RNA template except for two polypurine tracts (PPTs) situated at the 5'-end and near the center of the genome. It is not clear if both polymerase and RNase H activities are simultaneous. RNase H probably can proceed both in a polymerase-dependent (RNA cut into small fragments by the same RT performing DNA synthesis) and a polymerase-independent mode (cleavage of remaining RNA fragments by free RTs). Secondly, RT performs DNA-directed plus-strand DNA synthesis using the PPTs that have not been removed by RNase H as primers. PPTs and tRNA primers are then removed by RNase H. The 3' and 5' ssDNA PBS regions hybridize to form a circular dsDNA intermediate. Strand displacement synthesis by RT to the PBS and PPT ends produces a blunt ended, linear dsDNA copy of the viral genome that includes long terminal repeats (LTRs) at both ends. Its function is as follows. Catalyzes viral DNA integration into the host chromosome, by performing a series of DNA cutting and joining reactions. This enzyme activity takes place after virion entry into a cell and reverse transcription of the RNA genome in dsDNA. The first step in the integration process is 3' processing. This step requires a complex comprising the viral genome, matrix protein, Vpr and integrase. This complex is called the pre-integration complex (PIC). The integrase protein removes 2 nucleotides from each 3' end of the viral DNA, leaving recessed CA OH's at the 3' ends. In the second step, the PIC enters cell nucleus. This process is mediated through integrase and Vpr proteins, and allows the virus to infect a non dividing cell. This ability to enter the nucleus is specific of lentiviruses, other retroviruses cannot and rely on cell division to access cell chromosomes. In the third step, termed strand transfer, the integrase protein joins the previously processed 3' ends to the 5' ends of strands of target cellular DNA at the site of integration. The 5'-ends are produced by integrase-catalyzed staggered cuts, 5 bp apart. A Y-shaped, gapped, recombination intermediate results, with the 5'-ends of the viral DNA strands and the 3' ends of target DNA strands remaining unjoined, flanking a gap of 5 bp. The last step is viral DNA integration into host chromosome. This involves host DNA repair synthesis in which the 5 bp gaps between the unjoined strands are filled in and then ligated. Since this process occurs at both cuts flanking the HIV genome, a 5 bp duplication of host DNA is produced at the ends of HIV-1 integration. Alternatively, Integrase may catalyze the excision of viral DNA just after strand transfer, this is termed disintegration. This Homo sapiens (Human) protein is Gag-Pol polyprotein (gag-pol).